A 369-amino-acid polypeptide reads, in one-letter code: Phospho-N-acetylmuramoyl-pentapeptide-transferase (369 aa).

10 helical membrane passes run 3 to 23 (ALLGAGAISLVFTLFLTPLFI), 53 to 73 (GGIVIILASVIGYFAGHLLTW), 81 to 101 (VTPSGLLVVFMMVGLGFVGFL), 118 to 138 (WQKIAGQVIVATVFAVLAITL), 162 to 182 (FMALGAVIGTGLFIVWICLIV), 198 to 218 (LAAGASIFSIGSYVIIGFWQF), 240 to 260 (PLDLAIIAASIVGALIGFLWW), 267 to 287 (IFMGDTGSLGLGGALAALAIL), 290 to 310 (TELLLVFIGGLFVIVAGSVVL), and 347 to 367 (FWIIAGLLVAAGVGTFYLEWI).

Belongs to the glycosyltransferase 4 family. MraY subfamily. Requires Mg(2+) as cofactor.

The protein resides in the cell membrane. The catalysed reaction is UDP-N-acetyl-alpha-D-muramoyl-L-alanyl-gamma-D-glutamyl-meso-2,6-diaminopimeloyl-D-alanyl-D-alanine + di-trans,octa-cis-undecaprenyl phosphate = di-trans,octa-cis-undecaprenyl diphospho-N-acetyl-alpha-D-muramoyl-L-alanyl-D-glutamyl-meso-2,6-diaminopimeloyl-D-alanyl-D-alanine + UMP. Its pathway is cell wall biogenesis; peptidoglycan biosynthesis. In terms of biological role, catalyzes the initial step of the lipid cycle reactions in the biosynthesis of the cell wall peptidoglycan: transfers peptidoglycan precursor phospho-MurNAc-pentapeptide from UDP-MurNAc-pentapeptide onto the lipid carrier undecaprenyl phosphate, yielding undecaprenyl-pyrophosphoryl-MurNAc-pentapeptide, known as lipid I. This is Phospho-N-acetylmuramoyl-pentapeptide-transferase from Clavibacter sepedonicus (Clavibacter michiganensis subsp. sepedonicus).